We begin with the raw amino-acid sequence, 245 residues long: Fumarate reductase iron-sulfur subunit (245 aa).

The 82-residue stretch at 17–98 (PQSAVNKPHF…NGVITLMPMP (82 aa)) folds into the 2Fe-2S ferredoxin-type domain. The [2Fe-2S] cluster site is built by C60, C65, C68, and C80. The 30-residue stretch at 145 to 174 (AQEVFELDRCIECGCCIASCGTKLMRPNFI) folds into the 4Fe-4S ferredoxin-type domain. [4Fe-4S] cluster-binding residues include C154, C157, and C160. Residues C164, C211, and C217 each coordinate [3Fe-4S] cluster. C221 is a [4Fe-4S] cluster binding site.

It belongs to the succinate dehydrogenase/fumarate reductase iron-sulfur protein family. Part of an enzyme complex containing three subunits: a flavoprotein (frdA), an iron-sulfur protein (frdB), and diheme cytochrome b (frdC). Requires [2Fe-2S] cluster as cofactor. [3Fe-4S] cluster serves as cofactor. The cofactor is [4Fe-4S] cluster.

It carries out the reaction a menaquinone + succinate = a menaquinol + fumarate. This is Fumarate reductase iron-sulfur subunit (frdB) from Helicobacter pylori (strain J99 / ATCC 700824) (Campylobacter pylori J99).